We begin with the raw amino-acid sequence, 245 residues long: AA9 family lytic polysaccharide monooxygenase B (245 aa).

The signal sequence occupies residues 1–18; it reads MKSAIFAAAVLGAAGVSA. Cu(2+)-binding residues include H19 and H105. An intrachain disulfide couples C116 to C120. O2-binding residues include H179 and Q188. Residue Y190 coordinates Cu(2+).

The protein belongs to the polysaccharide monooxygenase AA9 family. Cu(2+) is required as a cofactor.

The protein resides in the secreted. It catalyses the reaction [(1-&gt;4)-beta-D-glucosyl]n+m + reduced acceptor + O2 = 4-dehydro-beta-D-glucosyl-[(1-&gt;4)-beta-D-glucosyl]n-1 + [(1-&gt;4)-beta-D-glucosyl]m + acceptor + H2O.. Its function is as follows. Lytic polysaccharide monooxygenase (LPMO) that depolymerizes crystalline and amorphous polysaccharides via the oxidation of scissile alpha- or beta-(1-4)-glycosidic bonds, yielding C1 or C4 oxidation products. Catalysis by LPMOs requires the reduction of the active-site copper from Cu(II) to Cu(I) by a reducing agent and H(2)O(2) or O(2) as a cosubstrate. Active on hemicelluloses, including xylan, glucomannan, and xyloglucan. Has no activity on ivory nut mannan (INM), a linear beta-1,4-linked mannan without substitutions. The protein is AA9 family lytic polysaccharide monooxygenase B of Malbranchea cinnamomea (Thermophilic fungus).